The chain runs to 263 residues: MADILKSVKRIVVKVGSSILVDNQEIAAHRIEALCQFIADLQTKYEVILVTSGAVAAGYTKKEMDKSYVPNKQALASMGQPLLMHMYYTELQKHGILCAQMLLAAYDLDSRKRTINAHNTIEVLISHKVIPIINENDATALEELVFGDNDRLSALVAHHFKANLLVILSDIDGYYTENPRTSTNATIRSVVHELSPDDLVAEATPNNRFATGGIVTKLQAAQFLLERGGKMYLSSGFHLEKARQFLLGGSHEIGTLFYSRVSS.

K14 lines the ATP pocket. Substrate is bound by residues S52, D137, and N149. ATP is bound by residues 169–170 (SD) and 211–217 (TGGIVTK).

It belongs to the glutamate 5-kinase family. As to quaternary structure, homotetramer; oligomerization is not affected by L-proline feedback inhibition. The cofactor is Mg(2+).

It carries out the reaction L-glutamate + ATP = L-glutamyl 5-phosphate + ADP. Its pathway is amino-acid biosynthesis; L-proline biosynthesis; L-glutamate 5-semialdehyde from L-glutamate: step 1/2. Inhibited by L-proline as part of a negative feedback loop. Also inhibited by L-proline analogs 3,4-dehydro-L-proline, L-azetidine-2-carboxylic acid and L-4-thiazolidine carboxylic acid. Catalyzes the transfer of a phosphate group to glutamate to form L-glutamate 5-phosphate. May be important for growth and survival. This is Glutamate 5-kinase from Leishmania donovani.